The sequence spans 307 residues: Isethionate sulfite-lyase activating enzyme (307 aa).

The region spanning 22–307 is the Radical SAM core domain; sequence HDGPGIRTVV…EAVVAQTADS (286 aa). [4Fe-4S] cluster contacts are provided by Cys36, Cys40, Cys43, Cys62, Cys68, Cys71, Cys75, Cys95, Cys98, Cys102, and Cys106. 42–44 provides a ligand contact to S-adenosyl-L-methionine; that stretch reads WCS. 2 consecutive 4Fe-4S ferredoxin-type domains span residues 53–85 and 86–117; these read VELAYNTGRCLTLAKCVRCVEICTAGAISRAED and DTISIDRALCNDCEQLCSGACPSNALITYGAH. Residues Gly146, 195–197, and His268 each bind S-adenosyl-L-methionine; that span reads DIK.

This sequence belongs to the organic radical-activating enzymes family. Monomer. [4Fe-4S] cluster serves as cofactor.

The enzyme catalyses glycyl-[protein] + reduced [flavodoxin] + S-adenosyl-L-methionine = glycin-2-yl radical-[protein] + semiquinone [flavodoxin] + 5'-deoxyadenosine + L-methionine + H(+). Its pathway is organosulfur degradation; alkanesulfonate degradation. Functionally, involved in an anaerobic respiration pathway that converts the sulfonate isethionate (2-hydroxyethanesulfonate) to ammonia, acetate and sulfide. Catalyzes activation of the isethionate sulfite-lyase IseG under anaerobic conditions by generation of an organic free radical on a glycine residue, via a homolytic cleavage of S-adenosyl-L-methionine (SAM). The protein is Isethionate sulfite-lyase activating enzyme of Nitratidesulfovibrio vulgaris (strain ATCC 29579 / DSM 644 / CCUG 34227 / NCIMB 8303 / VKM B-1760 / Hildenborough) (Desulfovibrio vulgaris).